Consider the following 711-residue polypeptide: Tyrosine-protein phosphatase 2 (711 aa).

Residues 21 to 130 (TESVSWIIDL…FASSHPDAIV (110 aa)) enclose the Rhodanese domain. 2 disordered regions span residues 275-306 (APQQ…SRVR) and 329-376 (IIPR…RANK). Composition is skewed to polar residues over residues 290-306 (SYPS…SRVR) and 340-363 (NAQN…SNTR). Residues 433 to 698 (EMTRSLAFND…KFLYDVVDYL (266 aa)) form the Tyrosine-protein phosphatase domain. Catalysis depends on Cys630, which acts as the Phosphocysteine intermediate.

This sequence belongs to the protein-tyrosine phosphatase family. Non-receptor class subfamily.

The protein localises to the cytoplasm. It catalyses the reaction O-phospho-L-tyrosyl-[protein] + H2O = L-tyrosyl-[protein] + phosphate. Functionally, plays a role in inhibiting the onset of mitosis. Dephosphorylates sty1/spc1 and wis1/spc2/sty2. This is Tyrosine-protein phosphatase 2 (pyp2) from Schizosaccharomyces pombe (strain 972 / ATCC 24843) (Fission yeast).